We begin with the raw amino-acid sequence, 436 residues long: ATP-dependent 6-phosphofructokinase (436 aa).

ATP-binding positions include Gly-90, 155 to 156 (RG), and 180 to 183 (GDGT). Asp-181 contributes to the Mg(2+) binding site. Substrate is bound by residues 209-211 (TID), 254-256 (MGR), Glu-307, and 362-365 (YMIR). Asp-211 functions as the Proton acceptor in the catalytic mechanism.

This sequence belongs to the phosphofructokinase type A (PFKA) family. PPi-dependent PFK group II subfamily. Atypical ATP-dependent clade 'X' sub-subfamily. As to quaternary structure, homodimer. Aggregates to a homotetramer after activation by ATP. It depends on Mg(2+) as a cofactor.

It localises to the cytoplasm. The enzyme catalyses beta-D-fructose 6-phosphate + ATP = beta-D-fructose 1,6-bisphosphate + ADP + H(+). It functions in the pathway carbohydrate degradation; glycolysis; D-glyceraldehyde 3-phosphate and glycerone phosphate from D-glucose: step 3/4. Its activity is regulated as follows. Activated by nucleoside triphosphates. Inhibited by phosphoenolpyruvate. EDTA and biphosphonates play the role of inhibitors of kinase activity. In terms of biological role, catalyzes the phosphorylation of D-fructose 6-phosphate to fructose 1,6-bisphosphate by ATP, the first committing step of glycolysis. The protein is ATP-dependent 6-phosphofructokinase (PPi-PFK) of Entamoeba histolytica (strain ATCC 30459 / HM-1:IMSS / ABRM).